The chain runs to 233 residues: 28 kDa ribonucleoprotein, chloroplastic (233 aa).

The span at 1–16 (CVAQTSEWEQEGSTNA) shows a compositional bias: polar residues. Positions 1–52 (CVAQTSEWEQEGSTNAVLEGESDPEGAVSWGSETQVSDEGGVEGGQGFSEPP) are disordered. RRM domains lie at 55–133 (AKLF…KAAP) and 149–227 (CRVY…VAEE).

The protein localises to the plastid. The protein resides in the chloroplast. Probably involved in the 3'-end processing of chloroplast mRNA's. The chain is 28 kDa ribonucleoprotein, chloroplastic from Spinacia oleracea (Spinach).